We begin with the raw amino-acid sequence, 837 residues long: Outer membrane usher protein HifC (837 aa).

Positions 1–26 are cleaved as a signal peptide; that stretch reads MKTKNFPLNKIAFACTLLLANPVAWA. Cysteines 813 and 833 form a disulfide.

The protein belongs to the fimbrial export usher family.

The protein localises to the cell outer membrane. Functionally, essential for piliation. This is Outer membrane usher protein HifC (hifC) from Haemophilus influenzae.